The chain runs to 320 residues: 4-hydroxy-3-methylbut-2-enyl diphosphate reductase 2 (320 aa).

C18 provides a ligand contact to [4Fe-4S] cluster. (2E)-4-hydroxy-3-methylbut-2-enyl diphosphate contacts are provided by H47 and H81. 2 residues coordinate dimethylallyl diphosphate: H47 and H81. Isopentenyl diphosphate contacts are provided by H47 and H81. Residue C103 coordinates [4Fe-4S] cluster. H131 is a binding site for (2E)-4-hydroxy-3-methylbut-2-enyl diphosphate. A dimethylallyl diphosphate-binding site is contributed by H131. H131 is an isopentenyl diphosphate binding site. E133 (proton donor) is an active-site residue. T172 contributes to the (2E)-4-hydroxy-3-methylbut-2-enyl diphosphate binding site. C202 serves as a coordination point for [4Fe-4S] cluster. (2E)-4-hydroxy-3-methylbut-2-enyl diphosphate is bound by residues S230, S231, N232, and S275. S230, S231, N232, and S275 together coordinate dimethylallyl diphosphate. Isopentenyl diphosphate contacts are provided by S230, S231, N232, and S275.

Belongs to the IspH family. It depends on [4Fe-4S] cluster as a cofactor.

It carries out the reaction isopentenyl diphosphate + 2 oxidized [2Fe-2S]-[ferredoxin] + H2O = (2E)-4-hydroxy-3-methylbut-2-enyl diphosphate + 2 reduced [2Fe-2S]-[ferredoxin] + 2 H(+). The catalysed reaction is dimethylallyl diphosphate + 2 oxidized [2Fe-2S]-[ferredoxin] + H2O = (2E)-4-hydroxy-3-methylbut-2-enyl diphosphate + 2 reduced [2Fe-2S]-[ferredoxin] + 2 H(+). It participates in isoprenoid biosynthesis; dimethylallyl diphosphate biosynthesis; dimethylallyl diphosphate from (2E)-4-hydroxy-3-methylbutenyl diphosphate: step 1/1. The protein operates within isoprenoid biosynthesis; isopentenyl diphosphate biosynthesis via DXP pathway; isopentenyl diphosphate from 1-deoxy-D-xylulose 5-phosphate: step 6/6. Catalyzes the conversion of 1-hydroxy-2-methyl-2-(E)-butenyl 4-diphosphate (HMBPP) into a mixture of isopentenyl diphosphate (IPP) and dimethylallyl diphosphate (DMAPP). Acts in the terminal step of the DOXP/MEP pathway for isoprenoid precursor biosynthesis. The protein is 4-hydroxy-3-methylbut-2-enyl diphosphate reductase 2 of Rhodopseudomonas palustris (strain ATCC BAA-98 / CGA009).